A 314-amino-acid chain; its full sequence is Cell division protein FtsQ (314 aa).

2 stretches are compositionally biased toward basic and acidic residues: residues 1 to 15 (MTEHNEDPQIERVAD) and 30 to 57 (ESKDEPAEHPEFEGPRRRARRERAERRA). Positions 1–57 (MTEHNEDPQIERVADDAADEEAVTEPLATESKDEPAEHPEFEGPRRRARRERAERRA) are disordered. The Cytoplasmic segment spans residues 1 to 99 (MTEHNEDPQI…AARGVVRGLK (99 aa)). The chain crosses the membrane as a helical span at residues 100 to 120 (ALLATVVLAVVGIGLGLALYF). Topologically, residues 121–314 (TPAMSAREIV…VSSPDLPTVK (194 aa)) are extracellular. The POTRA domain maps to 124–192 (MSAREIVIIG…SALRITIVER (69 aa)).

Belongs to the FtsQ/DivIB family. FtsQ subfamily.

Its subcellular location is the cell membrane. Essential cell division protein. The chain is Cell division protein FtsQ from Mycobacterium bovis (strain ATCC BAA-935 / AF2122/97).